The following is a 137-amino-acid chain: Small ribosomal subunit protein uS12 (137 aa).

Disordered regions lie at residues 1-21 and 34-57; these read MPTINQLVRKPRKSKVEKSDS and VHTKLAAPQKRGVATRVGTMTPKK.

This sequence belongs to the universal ribosomal protein uS12 family. Part of the 30S ribosomal subunit. Contacts proteins S8 and S17. May interact with IF1 in the 30S initiation complex.

Its function is as follows. With S4 and S5 plays an important role in translational accuracy. In terms of biological role, interacts with and stabilizes bases of the 16S rRNA that are involved in tRNA selection in the A site and with the mRNA backbone. Located at the interface of the 30S and 50S subunits, it traverses the body of the 30S subunit contacting proteins on the other side and probably holding the rRNA structure together. The combined cluster of proteins S8, S12 and S17 appears to hold together the shoulder and platform of the 30S subunit. This chain is Small ribosomal subunit protein uS12, found in Streptococcus mutans serotype c (strain ATCC 700610 / UA159).